Consider the following 494-residue polypeptide: Protein nucleotidyltransferase YdiU (494 aa).

8 residues coordinate ATP: glycine 101, glycine 103, arginine 104, lysine 123, aspartate 135, glycine 136, arginine 186, and arginine 193. Aspartate 262 acts as the Proton acceptor in catalysis. 2 residues coordinate Mg(2+): asparagine 263 and aspartate 272. Residue aspartate 272 coordinates ATP.

It belongs to the SELO family. Mg(2+) serves as cofactor. The cofactor is Mn(2+).

It carries out the reaction L-seryl-[protein] + ATP = 3-O-(5'-adenylyl)-L-seryl-[protein] + diphosphate. The enzyme catalyses L-threonyl-[protein] + ATP = 3-O-(5'-adenylyl)-L-threonyl-[protein] + diphosphate. The catalysed reaction is L-tyrosyl-[protein] + ATP = O-(5'-adenylyl)-L-tyrosyl-[protein] + diphosphate. It catalyses the reaction L-histidyl-[protein] + UTP = N(tele)-(5'-uridylyl)-L-histidyl-[protein] + diphosphate. It carries out the reaction L-seryl-[protein] + UTP = O-(5'-uridylyl)-L-seryl-[protein] + diphosphate. The enzyme catalyses L-tyrosyl-[protein] + UTP = O-(5'-uridylyl)-L-tyrosyl-[protein] + diphosphate. In terms of biological role, nucleotidyltransferase involved in the post-translational modification of proteins. It can catalyze the addition of adenosine monophosphate (AMP) or uridine monophosphate (UMP) to a protein, resulting in modifications known as AMPylation and UMPylation. The sequence is that of Protein nucleotidyltransferase YdiU from Chromohalobacter salexigens (strain ATCC BAA-138 / DSM 3043 / CIP 106854 / NCIMB 13768 / 1H11).